The chain runs to 154 residues: UPF0547 protein C16orf87 homolog (154 aa).

Positions 43-119 (NAKHSEKSPP…KHEEEREKQE (77 aa)) are disordered. Residues 68–84 (VRREKINSTVNKDLENR) are compositionally biased toward basic and acidic residues. Phosphoserine is present on Ser91. Residues 104-132 (KSSSAKKHEEEREKQEKEIDIYANLSDEK) adopt a coiled-coil conformation. Over residues 109–119 (KKHEEEREKQE) the composition is skewed to basic and acidic residues.

This sequence belongs to the UPF0547 family.

The protein is UPF0547 protein C16orf87 homolog of Mus musculus (Mouse).